Reading from the N-terminus, the 281-residue chain is Pantothenate synthetase (281 aa).

An ATP-binding site is contributed by 30–37 (MGYLHEGH). The active-site Proton donor is histidine 37. Glutamine 61 contacts (R)-pantoate. Residue glutamine 61 participates in beta-alanine binding. An ATP-binding site is contributed by 147 to 150 (GEKD). Residue glutamine 153 participates in (R)-pantoate binding. ATP contacts are provided by residues isoleucine 176 and 184–187 (KSSR).

Belongs to the pantothenate synthetase family. As to quaternary structure, homodimer.

The protein resides in the cytoplasm. The enzyme catalyses (R)-pantoate + beta-alanine + ATP = (R)-pantothenate + AMP + diphosphate + H(+). It participates in cofactor biosynthesis; (R)-pantothenate biosynthesis; (R)-pantothenate from (R)-pantoate and beta-alanine: step 1/1. In terms of biological role, catalyzes the condensation of pantoate with beta-alanine in an ATP-dependent reaction via a pantoyl-adenylate intermediate. This is Pantothenate synthetase from Clostridium botulinum (strain Okra / Type B1).